The primary structure comprises 444 residues: Glutamate--tRNA ligase 1 (444 aa).

Positions 10–20 (PSPTGRLHLGN) match the 'HIGH' region motif. The 'KMSKS' region signature appears at 241 to 245 (GLSKR). Lys-244 serves as a coordination point for ATP.

This sequence belongs to the class-I aminoacyl-tRNA synthetase family. Glutamate--tRNA ligase type 1 subfamily. As to quaternary structure, monomer.

It is found in the cytoplasm. It catalyses the reaction tRNA(Glu) + L-glutamate + ATP = L-glutamyl-tRNA(Glu) + AMP + diphosphate. Its function is as follows. Catalyzes the attachment of glutamate to tRNA(Glu) in a two-step reaction: glutamate is first activated by ATP to form Glu-AMP and then transferred to the acceptor end of tRNA(Glu). This chain is Glutamate--tRNA ligase 1, found in Rhodospirillum rubrum (strain ATCC 11170 / ATH 1.1.1 / DSM 467 / LMG 4362 / NCIMB 8255 / S1).